The primary structure comprises 341 residues: Hyaluronidase A (341 aa).

3 N-linked (GlcNAc...) asparagine glycosylation sites follow: N3, N68, and N83. 2 disulfide bridges follow: C23–C311 and C189–C201.

Belongs to the glycosyl hydrolase 56 family. Expressed by the venom gland.

It localises to the secreted. The enzyme catalyses Random hydrolysis of (1-&gt;4)-linkages between N-acetyl-beta-D-glucosamine and D-glucuronate residues in hyaluronate.. May hydrolyze high molecular weight hyaluronic acid to produce small oligosaccharides. The chain is Hyaluronidase A from Vespa velutina (Asian yellow-legged hornet).